A 631-amino-acid polypeptide reads, in one-letter code: 1-deoxy-D-xylulose-5-phosphate synthase (631 aa).

Residues His73 and 114–116 (SHA) contribute to the thiamine diphosphate site. Mg(2+) is bound at residue Asp145. Thiamine diphosphate contacts are provided by residues 146-147 (GA), Asn175, Tyr286, and Glu368. Asn175 lines the Mg(2+) pocket.

This sequence belongs to the transketolase family. DXPS subfamily. In terms of assembly, homodimer. The cofactor is Mg(2+). Thiamine diphosphate serves as cofactor.

It carries out the reaction D-glyceraldehyde 3-phosphate + pyruvate + H(+) = 1-deoxy-D-xylulose 5-phosphate + CO2. It functions in the pathway metabolic intermediate biosynthesis; 1-deoxy-D-xylulose 5-phosphate biosynthesis; 1-deoxy-D-xylulose 5-phosphate from D-glyceraldehyde 3-phosphate and pyruvate: step 1/1. Functionally, catalyzes the acyloin condensation reaction between C atoms 2 and 3 of pyruvate and glyceraldehyde 3-phosphate to yield 1-deoxy-D-xylulose-5-phosphate (DXP). The chain is 1-deoxy-D-xylulose-5-phosphate synthase from Nocardia farcinica (strain IFM 10152).